Consider the following 275-residue polypeptide: Bis(5'-nucleosyl)-tetraphosphatase, symmetrical (275 aa).

This sequence belongs to the Ap4A hydrolase family.

It carries out the reaction P(1),P(4)-bis(5'-adenosyl) tetraphosphate + H2O = 2 ADP + 2 H(+). Functionally, hydrolyzes diadenosine 5',5'''-P1,P4-tetraphosphate to yield ADP. The protein is Bis(5'-nucleosyl)-tetraphosphatase, symmetrical of Haemophilus influenzae (strain PittGG).